The primary structure comprises 537 residues: CTP synthase (537 aa).

The tract at residues 1–267 (MTKYIFVTGG…DQIVCDHLKL (267 aa)) is amidoligase domain. Residue Ser-13 coordinates CTP. Ser-13 provides a ligand contact to UTP. 14-19 (SIGKGI) lines the ATP pocket. Position 54 (Tyr-54) interacts with L-glutamine. Asp-71 is an ATP binding site. Mg(2+) contacts are provided by Asp-71 and Glu-141. Residues 148–150 (DIE), 188–193 (KTKPTQ), and Lys-224 contribute to the CTP site. Residues 188–193 (KTKPTQ) and Lys-224 each bind UTP. 240–242 (RDV) serves as a coordination point for ATP. Residues 292 to 535 (RIALVGKYVE…VTAAVKNKNQ (244 aa)) enclose the Glutamine amidotransferase type-1 domain. Gly-354 serves as a coordination point for L-glutamine. The Nucleophile; for glutamine hydrolysis role is filled by Cys-381. Residues 382–385 (LGMQ), Glu-405, and Arg-463 contribute to the L-glutamine site. Catalysis depends on residues His-508 and Glu-510.

This sequence belongs to the CTP synthase family. As to quaternary structure, homotetramer.

It catalyses the reaction UTP + L-glutamine + ATP + H2O = CTP + L-glutamate + ADP + phosphate + 2 H(+). The enzyme catalyses L-glutamine + H2O = L-glutamate + NH4(+). It carries out the reaction UTP + NH4(+) + ATP = CTP + ADP + phosphate + 2 H(+). The protein operates within pyrimidine metabolism; CTP biosynthesis via de novo pathway; CTP from UDP: step 2/2. With respect to regulation, allosterically activated by GTP, when glutamine is the substrate; GTP has no effect on the reaction when ammonia is the substrate. The allosteric effector GTP functions by stabilizing the protein conformation that binds the tetrahedral intermediate(s) formed during glutamine hydrolysis. Inhibited by the product CTP, via allosteric rather than competitive inhibition. Catalyzes the ATP-dependent amination of UTP to CTP with either L-glutamine or ammonia as the source of nitrogen. Regulates intracellular CTP levels through interactions with the four ribonucleotide triphosphates. The sequence is that of CTP synthase from Streptococcus equi subsp. zooepidemicus (strain H70).